The sequence spans 438 residues: Putative cytochrome P450 140 (438 aa).

Cysteine 381 is a binding site for heme.

This sequence belongs to the cytochrome P450 family. Heme serves as cofactor.

This chain is Putative cytochrome P450 140 (cyp140), found in Mycobacterium bovis (strain ATCC BAA-935 / AF2122/97).